A 184-amino-acid chain; its full sequence is CDP-archaeol synthase (184 aa).

Transmembrane regions (helical) follow at residues I4 to A24, F54 to I74, I86 to T106, G122 to A142, and F145 to P165.

Belongs to the CDP-archaeol synthase family. The cofactor is Mg(2+).

The protein localises to the cell membrane. The catalysed reaction is 2,3-bis-O-(geranylgeranyl)-sn-glycerol 1-phosphate + CTP + H(+) = CDP-2,3-bis-O-(geranylgeranyl)-sn-glycerol + diphosphate. Its pathway is membrane lipid metabolism; glycerophospholipid metabolism. In terms of biological role, catalyzes the formation of CDP-2,3-bis-(O-geranylgeranyl)-sn-glycerol (CDP-archaeol) from 2,3-bis-(O-geranylgeranyl)-sn-glycerol 1-phosphate (DGGGP) and CTP. This reaction is the third ether-bond-formation step in the biosynthesis of archaeal membrane lipids. This Picrophilus torridus (strain ATCC 700027 / DSM 9790 / JCM 10055 / NBRC 100828 / KAW 2/3) protein is CDP-archaeol synthase.